Consider the following 209-residue polypeptide: Large ribosomal subunit protein bL21m (209 aa).

A mitochondrion-targeting transit peptide spans Met-1–Phe-43.

Belongs to the bacterial ribosomal protein bL21 family. As to quaternary structure, component of the mitochondrial ribosome large subunit (39S) which comprises a 16S rRNA and about 50 distinct proteins.

It localises to the mitochondrion. The sequence is that of Large ribosomal subunit protein bL21m (Mrpl21) from Mus musculus (Mouse).